Consider the following 72-residue polypeptide: Translation initiation factor IF-1 (72 aa).

The region spanning 1 to 72 (MAKQSAIEQD…SKGRIVFRYK (72 aa)) is the S1-like domain.

This sequence belongs to the IF-1 family. In terms of assembly, component of the 30S ribosomal translation pre-initiation complex which assembles on the 30S ribosome in the order IF-2 and IF-3, IF-1 and N-formylmethionyl-tRNA(fMet); mRNA recruitment can occur at any time during PIC assembly.

It is found in the cytoplasm. One of the essential components for the initiation of protein synthesis. Stabilizes the binding of IF-2 and IF-3 on the 30S subunit to which N-formylmethionyl-tRNA(fMet) subsequently binds. Helps modulate mRNA selection, yielding the 30S pre-initiation complex (PIC). Upon addition of the 50S ribosomal subunit IF-1, IF-2 and IF-3 are released leaving the mature 70S translation initiation complex. This is Translation initiation factor IF-1 from Bacteroides fragilis (strain ATCC 25285 / DSM 2151 / CCUG 4856 / JCM 11019 / LMG 10263 / NCTC 9343 / Onslow / VPI 2553 / EN-2).